The chain runs to 399 residues: MKLVVLVALWLWPSSLLAYPTITVLPDEEQNLNHYVHILQNLIMSVPTKEQDLGKKLSSSRTVDSAEPRSLASKVLLTPGLVSAQDVTPESDVLIRPVDETTNSRTRGFTLRRRRTQSTAFWSIRPNNISVVLRTEEPFIEKEPEPELESSRLPTEPEPELEPEPEPVAESRQMSEPEEELVTSTTPNKELTGTSRISSMATQPANTQATRITVTVKTTSTMDVSTDSEDVPQLSGQSEIPSAEDLPGRHSLNTRHEDILKKISNINAEIQQGLLGGNNSPEFKEFIKASREHLKRSLALAAAAEHKLEQMYGSNVFPEGRTSDPDNDMEMIINMLYNSRSKLSDYFNIKRVPSELREKASVVNAELRKILCVDQVEMQSLIKKLLSNNMKILNILNVP.

An N-terminal signal peptide occupies residues 1-18; that stretch reads MKLVVLVALWLWPSSLLA. N-linked (GlcNAc...) asparagine glycosylation is present at asparagine 128. A compositionally biased stretch (basic and acidic residues) spans 136–145; that stretch reads EEPFIEKEPE. The disordered stretch occupies residues 136–250; sequence EEPFIEKEPE…PSAEDLPGRH (115 aa). The span at 157–167 shows a compositional bias: acidic residues; it reads PEPELEPEPEP. Residues 182 to 206 show a composition bias toward polar residues; it reads VTSTTPNKELTGTSRISSMATQPAN. Positions 207 to 225 are enriched in low complexity; that stretch reads TQATRITVTVKTTSTMDVS.

The protein belongs to the SPESP1 family. Post-translationally, glycosylated. In testis there are two predominant forms of 77- and 67-kDa and a form of 47-kDa, whereas in epididymal sperm from caput, corpus, and cauda there are two forms of 47- and 43-kDa. Testis forms contain complex carbohydrate residues. Epididymal sperm forms are N-glycosylated. Then undergoes significant glycosylation in the testis and that the majority of these glycoconjugates are removed by the time sperm reach the caput epididymis. In terms of tissue distribution, testis specific.

It localises to the cytoplasmic vesicle. Its subcellular location is the secretory vesicle. It is found in the acrosome. In terms of biological role, involved in fertilization ability of sperm. The chain is Sperm equatorial segment protein 1 from Mus musculus (Mouse).